A 528-amino-acid chain; its full sequence is Intestinal-type alkaline phosphatase (528 aa).

Positions 1 to 19 are cleaved as a signal peptide; that stretch reads MQGPWVLLLLGLRLQLSLG. Position 61 (Asp61) interacts with Mg(2+). Residues Asp61 and Ser111 each coordinate Zn(2+). Ser111 serves as the catalytic Phosphoserine intermediate. An intrachain disulfide couples Cys140 to Cys202. N-linked (GlcNAc...) asparagine glycosylation occurs at Asn141. Mg(2+) is bound at residue Ser174. Glu235 serves as a coordination point for Ca(2+). N-linked (GlcNAc...) asparagine glycosylation occurs at Asn268. Ca(2+)-binding residues include Phe288, Glu289, and Asp304. Glu330 contacts Mg(2+). Zn(2+)-binding residues include Asp335, His339, Asp376, and His377. Asn429 carries N-linked (GlcNAc...) asparagine glycosylation. His451 provides a ligand contact to Zn(2+). Cysteines 486 and 493 form a disulfide. Asp503 carries the GPI-anchor amidated aspartate lipid modification. A propeptide spans 504–528 (removed in mature form); the sequence is AAHPVAASLPLLAGTLLLLGASAAP.

This sequence belongs to the alkaline phosphatase family. As to quaternary structure, homodimer. The cofactor is Mg(2+). Zn(2+) is required as a cofactor. Ca(2+) serves as cofactor.

The protein localises to the cell membrane. The catalysed reaction is a phosphate monoester + H2O = an alcohol + phosphate. Its function is as follows. Alkaline phosphatase that can hydrolyze various phosphate compounds. The chain is Intestinal-type alkaline phosphatase (ALPI) from Homo sapiens (Human).